The following is a 371-amino-acid chain: Transaldolase (371 aa).

Catalysis depends on Lys140, which acts as the Schiff-base intermediate with substrate.

The protein belongs to the transaldolase family. Type 2 subfamily.

The protein resides in the cytoplasm. The enzyme catalyses D-sedoheptulose 7-phosphate + D-glyceraldehyde 3-phosphate = D-erythrose 4-phosphate + beta-D-fructose 6-phosphate. It participates in carbohydrate degradation; pentose phosphate pathway; D-glyceraldehyde 3-phosphate and beta-D-fructose 6-phosphate from D-ribose 5-phosphate and D-xylulose 5-phosphate (non-oxidative stage): step 2/3. In terms of biological role, transaldolase is important for the balance of metabolites in the pentose-phosphate pathway. This chain is Transaldolase, found in Arthrobacter sp. (strain FB24).